The primary structure comprises 67 residues: Large ribosomal subunit protein bL35 (67 aa).

It belongs to the bacterial ribosomal protein bL35 family.

In Rhizobium etli (strain ATCC 51251 / DSM 11541 / JCM 21823 / NBRC 15573 / CFN 42), this protein is Large ribosomal subunit protein bL35.